A 482-amino-acid polypeptide reads, in one-letter code: Falcipain-2b (482 aa).

Topologically, residues 1–35 are cytoplasmic; the sequence is MDYHMDYIPNEVISHQGERFVDKYVDRKILKNKKS. Residues 1–241 constitute a propeptide, activation peptide; sequence MDYHMDYIPN…PLKNSKYLLD (241 aa). Positions 16–25 match the Bipartite vacuolar targeting signal 1 motif; sequence QGERFVDKYV. Residues 36–56 form a helical; Signal-anchor for type II membrane protein membrane-spanning segment; the sequence is LLVIISLSVLSVVGFILFYFT. Residues 57 to 482 are Lumenal-facing; sequence PNFRKSDLFK…GTDAFIPLIE (426 aa). An N-linked (GlcNAc...) asparagine glycan is attached at Asn67. Positions 84–105 match the Bipartite vacuolar targeting signal 2 motif; it reads KSPNGKKFIVSKIDEALSFYDN. The N-linked (GlcNAc...) asparagine glycan is linked to Asn117. A Nose motif; required for the correct folding of the mature form motif is present at residues 242 to 258; that stretch reads QINYDAVIKKYKGNENF. Cystine bridges form between Cys280–Cys321, Cys314–Cys355, Cys340–Cys360, and Cys409–Cys470. Cys283 is a catalytic residue. His415 is a catalytic residue. The Arm motif; binds to host hemoglobin and required for the inhibitory interaction between the propeptide and the catalytic domain motif lies at 426–435; sequence EIVNPLTKKG.

The protein belongs to the peptidase C1 family. In terms of assembly, component of the hemozoin formation complex (HFC) composed of falcipains FP2A and/or FP2B, plasmepsins PMII, PMIII/HAP and PMIV, heme detoxifying protein HDP and falcilysin FLN. The HFC complex is involved in hemoglobin degradation and detoxification of heme in the food vacuole during the asexual blood stage.

Its subcellular location is the vacuole. The protein localises to the membrane. Functionally, cysteine protease which cleaves native host hemoglobin in the food vacuole during the asexual blood stage. Preferentially cleaves substrates which have a leucine at the P2 position. The sequence is that of Falcipain-2b from Plasmodium falciparum (isolate 3D7).